Reading from the N-terminus, the 99-residue chain is Putative regulatory protein Kole_1849 (99 aa).

Belongs to the RemA family.

The chain is Putative regulatory protein Kole_1849 from Kosmotoga olearia (strain ATCC BAA-1733 / DSM 21960 / TBF 19.5.1).